Here is a 94-residue protein sequence, read N- to C-terminus: Cystatin-A1 (94 aa).

Positions 45–49 match the Secondary area of contact motif; sequence QLVAG.

It belongs to the cystatin family.

Its subcellular location is the cytoplasm. Intracellular thiol proteinase inhibitor. Inhibits papain, but not cathepsin B. The protein is Cystatin-A1 (cpiA) of Dictyostelium discoideum (Social amoeba).